We begin with the raw amino-acid sequence, 508 residues long: Inosine-5'-monophosphate dehydrogenase (508 aa).

CBS domains follow at residues 111-170 and 174-230; these read FITD…EITL and MTTN…PDAS. NAD(+) contacts are provided by residues Asp-267 and 317–319; that span reads GMG. K(+)-binding residues include Gly-319 and Gly-321. Position 322 (Ser-322) interacts with IMP. Cys-324 is a K(+) binding site. The active-site Thioimidate intermediate is the Cys-324. Residues 357–359, 380–381, and 404–408 contribute to the IMP site; these read DGG, GF, and YRGMA. Arg-420 acts as the Proton acceptor in catalysis. IMP is bound at residue Gln-432. Gly-492 contacts K(+).

This sequence belongs to the IMPDH/GMPR family. In terms of assembly, homotetramer. Requires K(+) as cofactor.

It catalyses the reaction IMP + NAD(+) + H2O = XMP + NADH + H(+). It participates in purine metabolism; XMP biosynthesis via de novo pathway; XMP from IMP: step 1/1. Its activity is regulated as follows. Mycophenolic acid (MPA) is a non-competitive inhibitor that prevents formation of the closed enzyme conformation by binding to the same site as the amobile flap. In contrast, mizoribine monophosphate (MZP) is a competitive inhibitor that induces the closed conformation. MPA is a potent inhibitor of mammalian IMPDHs but a poor inhibitor of the bacterial enzymes. MZP is a more potent inhibitor of bacterial IMPDH. Functionally, catalyzes the conversion of inosine 5'-phosphate (IMP) to xanthosine 5'-phosphate (XMP), the first committed and rate-limiting step in the de novo synthesis of guanine nucleotides, and therefore plays an important role in the regulation of cell growth. This is Inosine-5'-monophosphate dehydrogenase from Leptospira interrogans serogroup Icterohaemorrhagiae serovar Lai (strain 56601).